The following is a 553-amino-acid chain: Thermosome subunit beta (553 aa).

Positions 534–553 are disordered; the sequence is KKSEGKTGEKKESEKGKEED.

This sequence belongs to the TCP-1 chaperonin family. As to quaternary structure, forms a Heterooligomeric complex of two stacked eight-membered rings.

Molecular chaperone; binds unfolded polypeptides in vitro, and has a weak ATPase activity. This Sulfolobus acidocaldarius (strain ATCC 33909 / DSM 639 / JCM 8929 / NBRC 15157 / NCIMB 11770) protein is Thermosome subunit beta (thsB).